Here is a 286-residue protein sequence, read N- to C-terminus: Aquaporin NIP1-3 (286 aa).

Residues 1–44 are disordered; that stretch reads MAGGEHGVNGQHEETRAMEEGSRDHQARCENSEQDGGSKSSSNN. Over residues 11 to 31 the composition is skewed to basic and acidic residues; it reads QHEETRAMEEGSRDHQARCEN. Polar residues predominate over residues 34-44; it reads QDGGSKSSSNN. Transmembrane regions (helical) follow at residues 56–76 and 84–104; these read VIAE…AVAV and VTFP…VYSV. The NPA 1 motif lies at 113-115; the sequence is NPA. 3 helical membrane passes run 131–153, 172–192, and 200–220; these read VPAY…RALF, SLAM…GVAT, and LAGL…GPIS. The short motif at 225-227 is the NPA 2 element; the sequence is NPA. The helical transmembrane segment at 239-259 threads the bilayer; sequence YTGIWVYIAGPVFGAVAGAWA.

The protein belongs to the MIP/aquaporin (TC 1.A.8) family. NIP (TC 1.A.8.12) subfamily.

It is found in the membrane. Functionally, aquaporins facilitate the transport of water and small neutral solutes across cell membranes. This Oryza sativa subsp. japonica (Rice) protein is Aquaporin NIP1-3 (NIP1-3).